We begin with the raw amino-acid sequence, 424 residues long: Histidine--tRNA ligase (424 aa).

Belongs to the class-II aminoacyl-tRNA synthetase family. Homodimer.

It is found in the cytoplasm. It carries out the reaction tRNA(His) + L-histidine + ATP = L-histidyl-tRNA(His) + AMP + diphosphate + H(+). The sequence is that of Histidine--tRNA ligase from Shewanella sediminis (strain HAW-EB3).